A 309-amino-acid polypeptide reads, in one-letter code: Ornithine carbamoyltransferase (309 aa).

Residues 57 to 60 (STRT), Q84, R108, and 135 to 138 (HPCQ) each bind carbamoyl phosphate. Residues N166, D226, and 230–231 (SM) each bind L-ornithine. Carbamoyl phosphate is bound by residues 265–266 (CL) and R293.

Belongs to the aspartate/ornithine carbamoyltransferase superfamily. OTCase family.

It is found in the cytoplasm. The catalysed reaction is carbamoyl phosphate + L-ornithine = L-citrulline + phosphate + H(+). Its pathway is amino-acid biosynthesis; L-arginine biosynthesis; L-arginine from L-ornithine and carbamoyl phosphate: step 1/3. Its function is as follows. Reversibly catalyzes the transfer of the carbamoyl group from carbamoyl phosphate (CP) to the N(epsilon) atom of ornithine (ORN) to produce L-citrulline. This chain is Ornithine carbamoyltransferase, found in Rhizorhabdus wittichii (strain DSM 6014 / CCUG 31198 / JCM 15750 / NBRC 105917 / EY 4224 / RW1) (Sphingomonas wittichii).